The primary structure comprises 124 residues: Large ribosomal subunit protein uL18 (124 aa).

The protein belongs to the universal ribosomal protein uL18 family. In terms of assembly, part of the 50S ribosomal subunit; part of the 5S rRNA/L5/L18/L25 subcomplex. Contacts the 5S and 23S rRNAs.

In terms of biological role, this is one of the proteins that bind and probably mediate the attachment of the 5S RNA into the large ribosomal subunit, where it forms part of the central protuberance. The sequence is that of Large ribosomal subunit protein uL18 from Desulfosudis oleivorans (strain DSM 6200 / JCM 39069 / Hxd3) (Desulfococcus oleovorans).